Reading from the N-terminus, the 243-residue chain is Probable transcriptional regulator ycf27 (243 aa).

Residues 7 to 120 (KILVVDDEAS…ELEARIRSVL (114 aa)) enclose the Response regulatory domain. Aspartate 56 carries the post-translational modification 4-aspartylphosphate. The H-T-H motif DNA-binding region spans 76–94 (DVPIIMLTALGEVCDRITG). A DNA-binding region (ompR/PhoB-type) is located at residues 135–236 (SGIISIGFLK…ARGTGYLFQR (102 aa)).

The protein localises to the plastid. It localises to the chloroplast. Its function is as follows. Probable promoter-specific protein mediating the interaction between DNA and RNA polymerase. This chain is Probable transcriptional regulator ycf27 (ycf27), found in Porphyra purpurea (Red seaweed).